Consider the following 180-residue polypeptide: uncharacterized protein (180 aa).

This is an uncharacterized protein from Homo sapiens (Human).